Reading from the N-terminus, the 295-residue chain is 3-methyl-2-oxobutanoate hydroxymethyltransferase (295 aa).

The interval 1-30 (MTSGRAMSPEETAPYGTGPARAESAPDAPA) is disordered. Residues Asp-76 and Asp-115 each coordinate Mg(2+). Residues 76-77 (DS), Asp-115, and Lys-145 contribute to the 3-methyl-2-oxobutanoate site. Glu-147 contacts Mg(2+). Glu-213 functions as the Proton acceptor in the catalytic mechanism.

It belongs to the PanB family. As to quaternary structure, homodecamer; pentamer of dimers. Requires Mg(2+) as cofactor.

Its subcellular location is the cytoplasm. The catalysed reaction is 3-methyl-2-oxobutanoate + (6R)-5,10-methylene-5,6,7,8-tetrahydrofolate + H2O = 2-dehydropantoate + (6S)-5,6,7,8-tetrahydrofolate. Its pathway is cofactor biosynthesis; (R)-pantothenate biosynthesis; (R)-pantoate from 3-methyl-2-oxobutanoate: step 1/2. Catalyzes the reversible reaction in which hydroxymethyl group from 5,10-methylenetetrahydrofolate is transferred onto alpha-ketoisovalerate to form ketopantoate. This is 3-methyl-2-oxobutanoate hydroxymethyltransferase from Nocardioides sp. (strain ATCC BAA-499 / JS614).